Consider the following 383-residue polypeptide: 3-dehydroquinate synthase (383 aa).

Residues 81 to 86 (EGEVSK), 115 to 119 (GVVGD), 139 to 140 (TS), Lys-152, and Lys-161 contribute to the NAD(+) site. Zn(2+) is bound by residues Glu-194, His-256, and His-274.

The protein belongs to the sugar phosphate cyclases superfamily. Dehydroquinate synthase family. It depends on Co(2+) as a cofactor. Zn(2+) serves as cofactor. NAD(+) is required as a cofactor.

The protein localises to the cytoplasm. It catalyses the reaction 7-phospho-2-dehydro-3-deoxy-D-arabino-heptonate = 3-dehydroquinate + phosphate. The protein operates within metabolic intermediate biosynthesis; chorismate biosynthesis; chorismate from D-erythrose 4-phosphate and phosphoenolpyruvate: step 2/7. Its function is as follows. Catalyzes the conversion of 3-deoxy-D-arabino-heptulosonate 7-phosphate (DAHP) to dehydroquinate (DHQ). The chain is 3-dehydroquinate synthase from Nitrobacter hamburgensis (strain DSM 10229 / NCIMB 13809 / X14).